The following is a 263-amino-acid chain: MAAASCFHALSTPARSSSSSLQSSSSRLPAPIKPNQLIIRSQKREETATNDAAISRRLALTVLIGAAAVGTKVSPADAAYGEAANVFGKQKSTEFSQYTGPGFKLSVPAKWNPSKEVEYPGQVLRYEDNFDTTSNLAVMVTPTDKKAITDYGAPEEFLSKVDYLLGKQAYFGKTASEGGFEQDAVATANILEVATPTVDGKQYYFLSVLTRTADGDEGGKHQLISATVSDGKLYICKAQAGDKRWFKGARKYVEGSTSFISVA.

The transit peptide at 1–78 (MAAASCFHAL…VGTKVSPADA (78 aa)) directs the protein to the chloroplast. Positions 14 to 30 (ARSSSSSLQSSSSRLPA) are enriched in low complexity. The disordered stretch occupies residues 14–34 (ARSSSSSLQSSSSRLPAPIKP).

It belongs to the PsbP family.

The protein localises to the plastid. It localises to the chloroplast thylakoid membrane. Functionally, may be involved in the regulation of photosystem II. The chain is Oxygen-evolving enhancer protein 2, chloroplastic from Helianthus annuus (Common sunflower).